A 622-amino-acid polypeptide reads, in one-letter code: Probable ATP-dependent RNA helicase DDX41 (622 aa).

A compositionally biased stretch (basic and acidic residues) spans 1–15 (MEESEPERKRARTDE). Disordered stretches follow at residues 1-39 (MEES…YVPL) and 52-84 (QRRR…PQSN). S4 is subject to Phosphoserine. N6-acetyllysine is present on K9. Residue K9 forms a Glycyl lysine isopeptide (Lys-Gly) (interchain with G-Cter in ubiquitin) linkage. S21 and S23 each carry phosphoserine. At Y33 the chain carries Phosphotyrosine. Residue K115 forms a Glycyl lysine isopeptide (Lys-Gly) (interchain with G-Cter in ubiquitin) linkage. Residues 181–209 (KSFKEMKFPAAILRGLKKKGIHHPTPIQI) carry the Q motif motif. Residues 212 to 396 (IPTILSGRDM…KSALVKPVTI (185 aa)) enclose the Helicase ATP-binding domain. ATP is bound at residue 225-232 (AFTGSGKT). The DEAD box motif lies at 344-347 (DEAD). Residues 407 to 567 (DVIQEVEYVK…KVPPVLQVLH (161 aa)) form the Helicase C-terminal domain. A Phosphotyrosine; by BTK modification is found at Y414. Residues K416 and K442 each participate in a glycyl lysine isopeptide (Lys-Gly) (interchain with G-Cter in SUMO2) cross-link. A CCHC-type zinc finger spans residues 580–597 (RGCAFCGGLGHRITDCPK).

It belongs to the DEAD box helicase family. DDX41 subfamily. Identified in the spliceosome C complex. Interacts with ERCC6. Interacts with FAM50A. Interacts with STING1. Interacts with CGAS. Interacts with several spliceosomes components such as PRP19 or CDC5L. Post-translationally, acetylation at Lys-9 regulates the nuclear/cytoplasmic localization. In terms of processing, phosphorylated by BTK; phosphorylation induces binding to dsDNA and STING1. 'Lys-48'-linked ubiquitinated and degraded by TRIM21 leading to negative regulation of the innate immune response to intracellular dsDNA.

Its subcellular location is the nucleus. It localises to the cytoplasm. The enzyme catalyses ATP + H2O = ADP + phosphate + H(+). Functionally, multifunctional protein that participates in many aspects of cellular RNA metabolism. Plays pivotal roles in innate immune sensing and hematopoietic homeostasis. Recognizes foreign or self-nucleic acids generated during microbial infection, thereby initiating anti-pathogen responses. Mechanistically, phosphorylation by BTK allows binding to dsDNA leading to interaction with STING1. Modulates the homeostasis of dsDNA through its ATP-dependent DNA-unwinding activity and ATP-independent strand-annealing activity. In turn, induces STING1-mediated type I interferon and cytokine responses to DNA and DNA viruses. Selectively modulates the transcription of certain immunity-associated genes by regulating their alternative splicing. Binds to RNA (R)-loops, structures consisting of DNA/RNA hybrids and a displaced strand of DNA that occur during transcription, and prevents their accumulation, thereby maintaining genome stability. Also participates in pre-mRNA splicing, translational regulation and snoRNA processing, which is essential for ribosome biogenesis. The protein is Probable ATP-dependent RNA helicase DDX41 (DDX41) of Homo sapiens (Human).